The sequence spans 105 residues: Phosphoribosyl-AMP cyclohydrolase (105 aa).

Residue aspartate 72 participates in Mg(2+) binding. Cysteine 73 provides a ligand contact to Zn(2+). Residues aspartate 74 and aspartate 76 each coordinate Mg(2+). Cysteine 89 and cysteine 96 together coordinate Zn(2+).

It belongs to the PRA-CH family. As to quaternary structure, homodimer. It depends on Mg(2+) as a cofactor. Zn(2+) serves as cofactor.

Its subcellular location is the cytoplasm. It carries out the reaction 1-(5-phospho-beta-D-ribosyl)-5'-AMP + H2O = 1-(5-phospho-beta-D-ribosyl)-5-[(5-phospho-beta-D-ribosylamino)methylideneamino]imidazole-4-carboxamide. It participates in amino-acid biosynthesis; L-histidine biosynthesis; L-histidine from 5-phospho-alpha-D-ribose 1-diphosphate: step 3/9. Functionally, catalyzes the hydrolysis of the adenine ring of phosphoribosyl-AMP. This Listeria monocytogenes serotype 4b (strain CLIP80459) protein is Phosphoribosyl-AMP cyclohydrolase.